A 460-amino-acid chain; its full sequence is Bifunctional protein GlmU (460 aa).

The segment at 1–235 (MTLTAAIVLA…PLSVEGVNDR (235 aa)) is pyrophosphorylase. Residues 9 to 12 (LAAG), Lys23, Gln76, and 81 to 82 (GT) each bind UDP-N-acetyl-alpha-D-glucosamine. Asp109 is a binding site for Mg(2+). Residues Gly146, Glu161, Asn176, and Asn233 each coordinate UDP-N-acetyl-alpha-D-glucosamine. A Mg(2+)-binding site is contributed by Asn233. The linker stretch occupies residues 236-256 (VQLASLAKAHNLRVCRQWMLD). Positions 257–460 (GVTIVDPQTT…VDNWKPAWER (204 aa)) are N-acetyltransferase. UDP-N-acetyl-alpha-D-glucosamine is bound by residues Arg338 and Lys356. His368 acts as the Proton acceptor in catalysis. Residues Tyr371 and Asn382 each contribute to the UDP-N-acetyl-alpha-D-glucosamine site. Residues 391 to 392 (NY) and Ala428 contribute to the acetyl-CoA site.

This sequence in the N-terminal section; belongs to the N-acetylglucosamine-1-phosphate uridyltransferase family. It in the C-terminal section; belongs to the transferase hexapeptide repeat family. Homotrimer. It depends on Mg(2+) as a cofactor.

Its subcellular location is the cytoplasm. The enzyme catalyses alpha-D-glucosamine 1-phosphate + acetyl-CoA = N-acetyl-alpha-D-glucosamine 1-phosphate + CoA + H(+). The catalysed reaction is N-acetyl-alpha-D-glucosamine 1-phosphate + UTP + H(+) = UDP-N-acetyl-alpha-D-glucosamine + diphosphate. The protein operates within nucleotide-sugar biosynthesis; UDP-N-acetyl-alpha-D-glucosamine biosynthesis; N-acetyl-alpha-D-glucosamine 1-phosphate from alpha-D-glucosamine 6-phosphate (route II): step 2/2. It functions in the pathway nucleotide-sugar biosynthesis; UDP-N-acetyl-alpha-D-glucosamine biosynthesis; UDP-N-acetyl-alpha-D-glucosamine from N-acetyl-alpha-D-glucosamine 1-phosphate: step 1/1. It participates in bacterial outer membrane biogenesis; LPS lipid A biosynthesis. Functionally, catalyzes the last two sequential reactions in the de novo biosynthetic pathway for UDP-N-acetylglucosamine (UDP-GlcNAc). The C-terminal domain catalyzes the transfer of acetyl group from acetyl coenzyme A to glucosamine-1-phosphate (GlcN-1-P) to produce N-acetylglucosamine-1-phosphate (GlcNAc-1-P), which is converted into UDP-GlcNAc by the transfer of uridine 5-monophosphate (from uridine 5-triphosphate), a reaction catalyzed by the N-terminal domain. The chain is Bifunctional protein GlmU from Bifidobacterium animalis subsp. lactis (strain AD011).